The sequence spans 1151 residues: Elicitor of plant defense protein 1 (1151 aa).

Disordered stretches follow at residues 22–130 (YQDP…TLGE), 178–197 (ERIR…RSIK), and 236–255 (NYNS…DMHP). Residues 39–49 (IIEDGEPEDEW) are compositionally biased toward acidic residues. A compositionally biased stretch (polar residues) spans 64–99 (QNSASRLSKMSLTERFSIQTLDDTDGNTKSNRSSAT). Low complexity predominate over residues 104 to 122 (NPPDFSNGNDDSNGNSQNP). The segment covering 178-187 (ERIRAEESDS) has biased composition (basic and acidic residues). Positions 242–500 (PPPEPLNTDP…NLCTEAFNPL (259 aa)) constitute a uDENN domain. The cDENN domain occupies 524 to 656 (EIPGSRTIDI…ARRKLMSLLQ (133 aa)). A dDENN domain is found at 658–1019 (AAPHKLRYGV…DREMQPANDA (362 aa)). Composition is skewed to polar residues over residues 695–711 (STPK…SSSG) and 744–760 (TSKS…SPVS). Residues 695–809 (STPKSTLGKW…SSSFGVDKHP (115 aa)) form a disordered region. Residues 784–798 (LREKRSGHFGEEKMR) show a composition bias toward basic and acidic residues. The segment at 886-934 (GHCFNYMPKDNTSMCTICNDLAEGDGVYRCTGCKIVSHGRCLGYCSLIC) adopts a Phorbol-ester/DAG-type zinc-finger fold.

The protein belongs to the EPD1 elicitor family.

The protein resides in the secreted. It is found in the host cell. Its function is as follows. Acts as an elicitor that triggers cell death and defense responses in the host plants. The sequence is that of Elicitor of plant defense protein 1 from Gibberella zeae (strain ATCC MYA-4620 / CBS 123657 / FGSC 9075 / NRRL 31084 / PH-1) (Wheat head blight fungus).